Here is a 167-residue protein sequence, read N- to C-terminus: Peptide deformylase (167 aa).

The Fe cation site is built by Cys91 and His133. Glu134 is an active-site residue. Position 137 (His137) interacts with Fe cation.

Belongs to the polypeptide deformylase family. Requires Fe(2+) as cofactor.

The enzyme catalyses N-terminal N-formyl-L-methionyl-[peptide] + H2O = N-terminal L-methionyl-[peptide] + formate. Functionally, removes the formyl group from the N-terminal Met of newly synthesized proteins. Requires at least a dipeptide for an efficient rate of reaction. N-terminal L-methionine is a prerequisite for activity but the enzyme has broad specificity at other positions. This chain is Peptide deformylase, found in Baumannia cicadellinicola subsp. Homalodisca coagulata.